A 296-amino-acid chain; its full sequence is Homoserine kinase (296 aa).

85–95 (PVARGLGSSAA) provides a ligand contact to ATP.

It belongs to the GHMP kinase family. Homoserine kinase subfamily.

It is found in the cytoplasm. It catalyses the reaction L-homoserine + ATP = O-phospho-L-homoserine + ADP + H(+). It participates in amino-acid biosynthesis; L-threonine biosynthesis; L-threonine from L-aspartate: step 4/5. Functionally, catalyzes the ATP-dependent phosphorylation of L-homoserine to L-homoserine phosphate. The polypeptide is Homoserine kinase (Moorella thermoacetica (strain ATCC 39073 / JCM 9320)).